The following is a 261-amino-acid chain: tRNA pseudouridine synthase A (261 aa).

Residue Asp51 is the Nucleophile of the active site. A substrate-binding site is contributed by Tyr109.

The protein belongs to the tRNA pseudouridine synthase TruA family. In terms of assembly, homodimer.

The enzyme catalyses uridine(38/39/40) in tRNA = pseudouridine(38/39/40) in tRNA. Functionally, formation of pseudouridine at positions 38, 39 and 40 in the anticodon stem and loop of transfer RNAs. In Shewanella pealeana (strain ATCC 700345 / ANG-SQ1), this protein is tRNA pseudouridine synthase A.